The chain runs to 120 residues: NAD(P)H-quinone oxidoreductase subunit 3, chloroplastic (120 aa).

A run of 3 helical transmembrane segments spans residues 9–29 (IFWA…LISG), 64–84 (MFAL…PWAM), and 88–108 (VLGV…IVGS).

This sequence belongs to the complex I subunit 3 family. As to quaternary structure, NDH is composed of at least 16 different subunits, 5 of which are encoded in the nucleus.

The protein resides in the plastid. It is found in the chloroplast thylakoid membrane. It catalyses the reaction a plastoquinone + NADH + (n+1) H(+)(in) = a plastoquinol + NAD(+) + n H(+)(out). It carries out the reaction a plastoquinone + NADPH + (n+1) H(+)(in) = a plastoquinol + NADP(+) + n H(+)(out). Its function is as follows. NDH shuttles electrons from NAD(P)H:plastoquinone, via FMN and iron-sulfur (Fe-S) centers, to quinones in the photosynthetic chain and possibly in a chloroplast respiratory chain. The immediate electron acceptor for the enzyme in this species is believed to be plastoquinone. Couples the redox reaction to proton translocation, and thus conserves the redox energy in a proton gradient. In Liriodendron tulipifera (Tuliptree), this protein is NAD(P)H-quinone oxidoreductase subunit 3, chloroplastic.